Reading from the N-terminus, the 323-residue chain is Viral cathepsin (323 aa).

The N-terminal stretch at M1 to A18 is a signal peptide. Residues Y19 to G112 constitute a propeptide, activation peptide. 3 disulfide bridges follow: C133/C174, C167/C207, and C262/C310. C136 is a catalytic residue. An N-linked (GlcNAc...) asparagine; by host glycan is attached at N158. Residues H269 and N289 contribute to the active site.

The protein belongs to the peptidase C1 family. Synthesized as an inactive proenzyme and activated by proteolytic removal of the inhibitory propeptide.

The catalysed reaction is Endopeptidase of broad specificity, hydrolyzing substrates of both cathepsin L and cathepsin B.. Cysteine protease that plays an essential role in host liquefaction to facilitate horizontal transmission of the virus. May participate in the degradation of foreign protein expressed by the baculovirus system. The chain is Viral cathepsin (VCATH) from Lepidoptera (butterflies and moths).